We begin with the raw amino-acid sequence, 338 residues long: MTRF1L release factor glutamine methyltransferase (338 aa).

S-adenosyl-L-methionine is bound by residues 167 to 171 (GCGSG), D190, W225, and N239. 239–242 (NPPY) contributes to the substrate binding site.

The protein belongs to the protein N5-glutamine methyltransferase family.

Its subcellular location is the mitochondrion. The enzyme catalyses L-glutaminyl-[peptide chain release factor] + S-adenosyl-L-methionine = N(5)-methyl-L-glutaminyl-[peptide chain release factor] + S-adenosyl-L-homocysteine + H(+). Its function is as follows. N5-glutamine methyltransferase responsible for the methylation of the glutamine residue in the universally conserved GGQ motif of the mitochondrial translation release factors MTRF1, MTRF1L, MRPL58/ICT1 and MTRFR. This is MTRF1L release factor glutamine methyltransferase (HEMK1) from Homo sapiens (Human).